The primary structure comprises 244 residues: DNA repair protein RecO (244 aa).

Belongs to the RecO family.

Involved in DNA repair and RecF pathway recombination. This chain is DNA repair protein RecO, found in Jannaschia sp. (strain CCS1).